The primary structure comprises 243 residues: Carboxy-S-adenosyl-L-methionine synthase (243 aa).

S-adenosyl-L-methionine-binding positions include Tyr-40, 65–67 (GCS), 90–91 (DN), 118–119 (DI), Asn-133, and Arg-200.

The protein belongs to the class I-like SAM-binding methyltransferase superfamily. Cx-SAM synthase family. In terms of assembly, homodimer.

The enzyme catalyses prephenate + S-adenosyl-L-methionine = carboxy-S-adenosyl-L-methionine + 3-phenylpyruvate + H2O. In terms of biological role, catalyzes the conversion of S-adenosyl-L-methionine (SAM) to carboxy-S-adenosyl-L-methionine (Cx-SAM). The sequence is that of Carboxy-S-adenosyl-L-methionine synthase from Shewanella oneidensis (strain ATCC 700550 / JCM 31522 / CIP 106686 / LMG 19005 / NCIMB 14063 / MR-1).